The primary structure comprises 61 residues: Large ribosomal subunit protein bL32 (61 aa).

Residues 1–16 (MAVPKRKTSPSKRGMR) are compositionally biased toward basic residues. The interval 1–41 (MAVPKRKTSPSKRGMRRSADALKASTYVEDKNSGELRRPHH) is disordered. Over residues 28-41 (VEDKNSGELRRPHH) the composition is skewed to basic and acidic residues.

Belongs to the bacterial ribosomal protein bL32 family.

This Rhizobium rhizogenes (strain K84 / ATCC BAA-868) (Agrobacterium radiobacter) protein is Large ribosomal subunit protein bL32.